A 117-amino-acid polypeptide reads, in one-letter code: DNA-directed RNA polymerase subunit omega (117 aa).

The protein belongs to the RNA polymerase subunit omega family. In terms of assembly, the RNAP catalytic core consists of 2 alpha, 1 beta, 1 beta' and 1 omega subunit. When a sigma factor is associated with the core the holoenzyme is formed, which can initiate transcription.

It catalyses the reaction RNA(n) + a ribonucleoside 5'-triphosphate = RNA(n+1) + diphosphate. Promotes RNA polymerase assembly. Latches the N- and C-terminal regions of the beta' subunit thereby facilitating its interaction with the beta and alpha subunits. This chain is DNA-directed RNA polymerase subunit omega, found in Cereibacter sphaeroides (strain ATCC 17029 / ATH 2.4.9) (Rhodobacter sphaeroides).